Here is a 430-residue protein sequence, read N- to C-terminus: N-lysine methyltransferase SMYD2-A (430 aa).

The SET domain occupies 5–239 (EGLERFDSPG…AGDEVFTSYI (235 aa)). 15 to 17 (KGR) lines the S-adenosyl-L-methionine pocket. Cysteine 50, cysteine 53, cysteine 63, cysteine 66, cysteine 72, cysteine 76, histidine 84, and cysteine 88 together coordinate Zn(2+). An MYND-type zinc finger spans residues 50–88 (CDFCFARKEGLSKCGKCKQAFYCNVDCQKGDWPMHKLEC). Residues histidine 135, 204–205 (NH), and 256–258 (YFF) contribute to the S-adenosyl-L-methionine site.

Belongs to the class V-like SAM-binding methyltransferase superfamily.

The protein resides in the cytoplasm. It localises to the cytosol. Its subcellular location is the nucleus. It catalyses the reaction L-lysyl(4)-[histone H3] + 3 S-adenosyl-L-methionine = N(6),N(6),N(6)-trimethyl-L-lysyl(4)-[histone H3] + 3 S-adenosyl-L-homocysteine + 3 H(+). The catalysed reaction is L-lysyl-[protein] + S-adenosyl-L-methionine = N(6)-methyl-L-lysyl-[protein] + S-adenosyl-L-homocysteine + H(+). Functionally, protein-lysine N-methyltransferase that methylates both histones and non-histone proteins, including p53/TP53 and RB1. Specifically trimethylates histone H3 'Lys-4' (H3K4me3) in vivo. The activity requires interaction with HSP90alpha. Shows even higher methyltransferase activity on p53/TP53. Monomethylates 'Lys-370' of p53/TP53, leading to decreased DNA-binding activity and subsequent transcriptional regulation activity of p53/TP53. Monomethylates RB1 at 'Lys-860'. In Xenopus laevis (African clawed frog), this protein is N-lysine methyltransferase SMYD2-A (smyd2-a).